We begin with the raw amino-acid sequence, 283 residues long: Large ribosomal subunit protein uL2 (283 aa).

Disordered regions lie at residues 37–59 (AKKK…RGGG) and 219–283 (HKGI…RNSK). Over residues 256–269 (WGKRHMGVKTRNNK) the composition is skewed to basic residues.

The protein belongs to the universal ribosomal protein uL2 family. Part of the 50S ribosomal subunit. Forms a bridge to the 30S subunit in the 70S ribosome.

In terms of biological role, one of the primary rRNA binding proteins. Required for association of the 30S and 50S subunits to form the 70S ribosome, for tRNA binding and peptide bond formation. It has been suggested to have peptidyltransferase activity; this is somewhat controversial. Makes several contacts with the 16S rRNA in the 70S ribosome. The protein is Large ribosomal subunit protein uL2 of Mycoplasmoides gallisepticum (strain R(low / passage 15 / clone 2)) (Mycoplasma gallisepticum).